Consider the following 397-residue polypeptide: Transcription factor GATA-5 (397 aa).

The disordered stretch occupies residues Gly-48–Tyr-116. A compositionally biased stretch (low complexity) spans Pro-87–Gly-101. Positions Pro-102–Asp-112 are enriched in gly residues. 2 GATA-type zinc fingers span residues Cys-189–Cys-213 and Cys-243–Cys-267. Residues Ala-281–Ala-356 are disordered. Residues Thr-289–Ala-298 show a composition bias toward basic residues. A compositionally biased stretch (low complexity) spans Ala-310 to Ser-335.

It localises to the nucleus. In terms of biological role, transcription factor required during cardiovascular development. Plays an important role in the transcriptional program(s) that underlies smooth muscle cell diversity. Binds to the functionally important CEF-1 nuclear protein binding site in the cardiac-specific slow/cardiac troponin C transcriptional enhancer. This Homo sapiens (Human) protein is Transcription factor GATA-5.